We begin with the raw amino-acid sequence, 540 residues long: Chaperonin GroEL (540 aa).

ATP contacts are provided by residues 29–32, 86–90, G413, and D493; these read TLGP and DGTTT. A disordered region spans residues 520-540; that stretch reads AEKPEPKPAPGPADPGAGMDF.

Belongs to the chaperonin (HSP60) family. In terms of assembly, forms a cylinder of 14 subunits composed of two heptameric rings stacked back-to-back. Interacts with the co-chaperonin GroES.

It localises to the cytoplasm. The enzyme catalyses ATP + H2O + a folded polypeptide = ADP + phosphate + an unfolded polypeptide.. Its function is as follows. Together with its co-chaperonin GroES, plays an essential role in assisting protein folding. The GroEL-GroES system forms a nano-cage that allows encapsulation of the non-native substrate proteins and provides a physical environment optimized to promote and accelerate protein folding. This chain is Chaperonin GroEL, found in Tropheryma whipplei (Whipple's bacillus).